The chain runs to 218 residues: Small ribosomal subunit protein uS3 (218 aa).

In terms of domain architecture, KH type-2 spans 38 to 106 (IREYLTKRLS…RVHINIVEIK (69 aa)).

The protein belongs to the universal ribosomal protein uS3 family. In terms of assembly, part of the 30S ribosomal subunit. Forms a tight complex with proteins S10 and S14.

Functionally, binds the lower part of the 30S subunit head. Binds mRNA in the 70S ribosome, positioning it for translation. The chain is Small ribosomal subunit protein uS3 from Anoxybacillus flavithermus (strain DSM 21510 / WK1).